The chain runs to 150 residues: Transcriptional regulator MraZ (150 aa).

2 SpoVT-AbrB domains span residues 8 to 55 and 84 to 127; these read FINN…GISH and AVQL…QPQN.

Belongs to the MraZ family. Forms oligomers.

Its subcellular location is the cytoplasm. The protein localises to the nucleoid. The chain is Transcriptional regulator MraZ from Rickettsia bellii (strain OSU 85-389).